Here is a 147-residue protein sequence, read N- to C-terminus: D-aminoacyl-tRNA deacylase (147 aa).

The short motif at 137–138 (GP) is the Gly-cisPro motif, important for rejection of L-amino acids element.

Belongs to the DTD family. In terms of assembly, homodimer.

It localises to the cytoplasm. It carries out the reaction glycyl-tRNA(Ala) + H2O = tRNA(Ala) + glycine + H(+). It catalyses the reaction a D-aminoacyl-tRNA + H2O = a tRNA + a D-alpha-amino acid + H(+). Functionally, an aminoacyl-tRNA editing enzyme that deacylates mischarged D-aminoacyl-tRNAs. Also deacylates mischarged glycyl-tRNA(Ala), protecting cells against glycine mischarging by AlaRS. Acts via tRNA-based rather than protein-based catalysis; rejects L-amino acids rather than detecting D-amino acids in the active site. By recycling D-aminoacyl-tRNA to D-amino acids and free tRNA molecules, this enzyme counteracts the toxicity associated with the formation of D-aminoacyl-tRNA entities in vivo and helps enforce protein L-homochirality. The sequence is that of D-aminoacyl-tRNA deacylase from Jannaschia sp. (strain CCS1).